Reading from the N-terminus, the 368-residue chain is MTMAKNILRAITAIVRRDAKTPDTDDSAGSVTFDGALDDLDVAGLVEVGRGPIADIAIDADRETIVVTNSAADCLTVINPYTLAPVGSVRLNGEPFAVAAADDRAYVSVVTAGHDAIKVVDTITGSVLAEYPLAMTVTALAMSPDGKRVFVGRSGHDRIDVAVIDTAAERVGTIDLASGAGAGVDALRVDASGKRLYVATTDPRGSRMVTVNIETAQIESTVWIGAPIRDLALGADGKALVLTSDRQRRGVVHIVDLSTAAVVGAIQIGGAPTQLVLSPDATRAYVVDYDRVIVLCTLTNEILGSIDVGMQPAAVAVRRDGARVYVADYSGQVNAFDVAAELPALYSRLVASEPRQDATTVLPSLQTA.

Interacts with MmpL3 and TtfA.

The protein localises to the cell septum. It localises to the cell tip. In terms of biological role, stabilizes the MmpL3/TtfA trehalose monomycolate (TMM) transport complex under stress conditions. This chain is Seven-bladed beta-propeller protein MSMEG_5308, found in Mycolicibacterium smegmatis (strain ATCC 700084 / mc(2)155) (Mycobacterium smegmatis).